A 253-amino-acid polypeptide reads, in one-letter code: Ubiquinone biosynthesis O-methyltransferase (253 aa).

S-adenosyl-L-methionine-binding residues include Arg-45, Gly-76, Asp-97, and Met-140.

It belongs to the methyltransferase superfamily. UbiG/COQ3 family.

The catalysed reaction is a 3-demethylubiquinol + S-adenosyl-L-methionine = a ubiquinol + S-adenosyl-L-homocysteine + H(+). It carries out the reaction a 3-(all-trans-polyprenyl)benzene-1,2-diol + S-adenosyl-L-methionine = a 2-methoxy-6-(all-trans-polyprenyl)phenol + S-adenosyl-L-homocysteine + H(+). It functions in the pathway cofactor biosynthesis; ubiquinone biosynthesis. O-methyltransferase that catalyzes the 2 O-methylation steps in the ubiquinone biosynthetic pathway. The sequence is that of Ubiquinone biosynthesis O-methyltransferase from Parvibaculum lavamentivorans (strain DS-1 / DSM 13023 / NCIMB 13966).